The sequence spans 327 residues: MAAQESLHVKTPLRDSMALSKLAGTSVFLKMDSSQPSGSFKIRGIGHLCKMKAKQGCRHFVCSSAGNAGMATAYAARRLGIPATIVVPNTTPALTIERLKNEGATVEVVGEMLDEAIQVAKALEKNNPGWVYISPFDDPLIWEGHTSLVKELKETLSAKPGAIVLSVGGGGLLCGVVQGLREVGWEDVPIIAMETFGAHSFHAAIKEGKLVTLPKITSVAKALGVNTVGAQTLKLFYEHPIFSEVISDQEAVSALEKFVDDEKILVEPACGAALAAVYSRVVCRLQDEGRLQTPLASLVVIVCGGSNISLAQLQALKVQLGLNGLPE.

At A2 the chain carries N-acetylalanine. Residue K41 is modified to N6-(pyridoxal phosphate)lysine. P128 lines the pyridoxal 5'-phosphate pocket.

It belongs to the serine/threonine dehydratase family. Homodimer. Requires pyridoxal 5'-phosphate as cofactor.

Its subcellular location is the cytoplasm. The catalysed reaction is L-serine = pyruvate + NH4(+). It catalyses the reaction L-threonine = 2-oxobutanoate + NH4(+). It participates in carbohydrate biosynthesis; gluconeogenesis. In terms of biological role, catalyzes the pyridoxal-phosphate-dependent dehydrative deamination of L-threonine and L-serine to ammonia and alpha-ketobutyrate and pyruvate, respectively. The chain is L-serine dehydratase/L-threonine deaminase (Sds) from Mus musculus (Mouse).